A 415-amino-acid polypeptide reads, in one-letter code: Citrate (Re)-synthase (415 aa).

The Pyruvate carboxyltransferase domain maps to 4–275 (IFIIDVTNRD…GHEVDLSKAW (272 aa)).

This sequence belongs to the alpha-IPM synthase/homocitrate synthase family. Mn(2+) is required as a cofactor.

It carries out the reaction oxaloacetate + acetyl-CoA + H2O = citrate + CoA + H(+). Inhibited by citrate and under aerobic conditions. In terms of biological role, catalyzes the condensation of the acetyl group of acetyl coenzyme A (acetyl-CoA) with oxaloacetate to form citrate. This enzyme is highly Re-face stereospecific with respect to the C-2 of oxaloacetate. The chain is Citrate (Re)-synthase from Dehalococcoides mccartyi (strain CBDB1).